A 532-amino-acid polypeptide reads, in one-letter code: Alkaline phosphatase (532 aa).

The tract at residues 1–20 (MASERDPLLPVHGEGPESPS) is disordered. The chain crosses the membrane as a helical; Signal-anchor for type II membrane protein span at residues 27-47 (WIKHGILLILVLSTVIFFYFF). Residue D68 participates in Mg(2+) binding. Zn(2+) is bound at residue D68. The Phosphoserine intermediate role is filled by S115. Positions 166, 168, and 306 each coordinate Mg(2+). Residues D311, H315, D352, H353, and H456 each coordinate Zn(2+).

Belongs to the alkaline phosphatase family. Mg(2+) serves as cofactor. It depends on Zn(2+) as a cofactor.

Its subcellular location is the membrane. The enzyme catalyses a phosphate monoester + H2O = an alcohol + phosphate. The polypeptide is Alkaline phosphatase (Schizosaccharomyces pombe (strain 972 / ATCC 24843) (Fission yeast)).